The chain runs to 379 residues: Cytochrome b (379 aa).

4 consecutive transmembrane segments (helical) span residues 33-53 (FGSLLGTCLVIQILTGLFLAM), 77-98 (WLIRYLHANGASMFFICLFIHV), 113-133 (WNIGIILFLTTMATAFVGYVL), and 178-198 (FFAFHFILPFIIAAFTLVHLL). 2 residues coordinate heme b: His-83 and His-97. 2 residues coordinate heme b: His-182 and His-196. Position 201 (His-201) interacts with a ubiquinone. 4 helical membrane-spanning segments follow: residues 226-246 (TKDLLGIFLLLLALMILTLFF), 288-308 (LGGVLALILSILILATFPLLN), 320-340 (ITQTIYWIFIANLLVLTWIGG), and 347-367 (FTTIGQIASITYFAIIIILIP).

It belongs to the cytochrome b family. In terms of assembly, the cytochrome bc1 complex contains 11 subunits: 3 respiratory subunits (MT-CYB, CYC1 and UQCRFS1), 2 core proteins (UQCRC1 and UQCRC2) and 6 low-molecular weight proteins (UQCRH/QCR6, UQCRB/QCR7, UQCRQ/QCR8, UQCR10/QCR9, UQCR11/QCR10 and a cleavage product of UQCRFS1). This cytochrome bc1 complex then forms a dimer. It depends on heme b as a cofactor.

Its subcellular location is the mitochondrion inner membrane. Functionally, component of the ubiquinol-cytochrome c reductase complex (complex III or cytochrome b-c1 complex) that is part of the mitochondrial respiratory chain. The b-c1 complex mediates electron transfer from ubiquinol to cytochrome c. Contributes to the generation of a proton gradient across the mitochondrial membrane that is then used for ATP synthesis. This Akodon azarae (Azara's grass mouse) protein is Cytochrome b (MT-CYB).